We begin with the raw amino-acid sequence, 140 residues long: Probable deoxyuridine 5'-triphosphate nucleotidohydrolase (140 aa).

Residues 62–64, 76–79, Arg130, and 135–136 each bind substrate; these read RSG, GVID, and FG.

This sequence belongs to the dUTPase family. As to quaternary structure, homotrimer. Requires Mg(2+) as cofactor.

It catalyses the reaction dUTP + H2O = dUMP + diphosphate + H(+). It functions in the pathway pyrimidine metabolism; dUMP biosynthesis; dUMP from dCTP (dUTP route): step 2/2. Its function is as follows. This enzyme is involved in nucleotide metabolism: it produces dUMP, the immediate precursor of thymidine nucleotides and it decreases the intracellular concentration of dUTP so that uracil cannot be incorporated into DNA. The polypeptide is Probable deoxyuridine 5'-triphosphate nucleotidohydrolase (Schizosaccharomyces pombe (strain 972 / ATCC 24843) (Fission yeast)).